A 204-amino-acid chain; its full sequence is Thymidylate kinase (204 aa).

Residue 10-17 (GGDGAGKT) participates in ATP binding.

It belongs to the thymidylate kinase family.

It carries out the reaction dTMP + ATP = dTDP + ADP. Its function is as follows. Phosphorylation of dTMP to form dTDP in both de novo and salvage pathways of dTTP synthesis. The chain is Thymidylate kinase from Cutibacterium acnes (strain DSM 16379 / KPA171202) (Propionibacterium acnes).